Here is a 330-residue protein sequence, read N- to C-terminus: MKTAYIAKQRQISFVKSHFSRQLEEKLGLIEVQAPILSRVGDGTQDNLSGCEKAVQVKVKTLPDAQFEVVHSLAKWKRQTLGQHDFSAGEGLYTHMKALRPDEDRLTPIHSVYVDQWDWERVMGDEERHVGTLKATVEAIYAGIKATELAVSQEFGLTPFLPEQIHFVHSQELLSRYPELDAKGRERAIAKELGAVFLIGIGGKLADGKRHDVRAPDYDDWSTEVSEGFAGLNGDILVWNPVLEDAFEISSMGIRVDAEALKRQLALTGDEDRLKLEWHQALLRGEMPQTIGGGIGQSRLTMLLLQLDHIGQVQCGVWPAQVRESVSALL.

Belongs to the class-II aminoacyl-tRNA synthetase family. AsnA subfamily.

It is found in the cytoplasm. It catalyses the reaction L-aspartate + NH4(+) + ATP = L-asparagine + AMP + diphosphate + H(+). It functions in the pathway amino-acid biosynthesis; L-asparagine biosynthesis; L-asparagine from L-aspartate (ammonia route): step 1/1. The polypeptide is Aspartate--ammonia ligase (Klebsiella pneumoniae subsp. pneumoniae (strain ATCC 700721 / MGH 78578)).